Here is a 1092-residue protein sequence, read N- to C-terminus: DNA polymerase II large subunit (1092 aa).

This sequence belongs to the archaeal DNA polymerase II family. As to quaternary structure, heterodimer of a large subunit and a small subunit.

It catalyses the reaction DNA(n) + a 2'-deoxyribonucleoside 5'-triphosphate = DNA(n+1) + diphosphate. It carries out the reaction Exonucleolytic cleavage in the 3'- to 5'-direction to yield nucleoside 5'-phosphates.. Possesses two activities: a DNA synthesis (polymerase) and an exonucleolytic activity that degrades single-stranded DNA in the 3'- to 5'-direction. Has a template-primer preference which is characteristic of a replicative DNA polymerase. In Methanothermobacter thermautotrophicus (strain ATCC 29096 / DSM 1053 / JCM 10044 / NBRC 100330 / Delta H) (Methanobacterium thermoautotrophicum), this protein is DNA polymerase II large subunit (polC).